Consider the following 501-residue polypeptide: GMP synthase [glutamine-hydrolyzing] (501 aa).

The 185-residue stretch at 1-185 (MVLVVDYGSQ…LFNVCKLEKN (185 aa)) folds into the Glutamine amidotransferase type-1 domain. Cys75 (nucleophile) is an active-site residue. Residues His159 and Glu161 contribute to the active site. Residues 186 to 376 (WKIGDLVEEK…LGIPDRIINR (191 aa)) enclose the GMPS ATP-PPase domain. 213–219 (SGGVDSS) is an ATP binding site.

Homodimer.

The catalysed reaction is XMP + L-glutamine + ATP + H2O = GMP + L-glutamate + AMP + diphosphate + 2 H(+). Its pathway is purine metabolism; GMP biosynthesis; GMP from XMP (L-Gln route): step 1/1. Its function is as follows. Catalyzes the synthesis of GMP from XMP. The polypeptide is GMP synthase [glutamine-hydrolyzing] (guaA) (Thermotoga maritima (strain ATCC 43589 / DSM 3109 / JCM 10099 / NBRC 100826 / MSB8)).